Reading from the N-terminus, the 530-residue chain is Ubiquitin carboxyl-terminal hydrolase 17 (530 aa).

The 296-residue stretch at 80-375 (AGLQNMGNTC…QAYVLFYIQK (296 aa)) folds into the USP domain. Residue Cys-89 is the Nucleophile of the active site. The active-site Proton acceptor is His-334. Basic and acidic residues-rich tracts occupy residues 382-392 (SESVSRGREPR) and 398-413 (DTDR…RDHP). Disordered regions lie at residues 382–416 (SESV…PCLQ) and 490–530 (SSTT…LVCQ). The interval 399–530 (TDRRATQGEL…HSKRALLVCQ (132 aa)) is mediates interaction with SUDS3. Positions 498–510 (ESVNTGTLASLQG) are enriched in polar residues. Residues 511 to 524 (RTRRSKGKNKHSKR) are compositionally biased toward basic residues.

Belongs to the peptidase C19 family. USP17 subfamily. In terms of assembly, interacts with SUDS3; the interaction is direct. In terms of tissue distribution, broadly expressed.

Its subcellular location is the nucleus. It localises to the endoplasmic reticulum. It catalyses the reaction Thiol-dependent hydrolysis of ester, thioester, amide, peptide and isopeptide bonds formed by the C-terminal Gly of ubiquitin (a 76-residue protein attached to proteins as an intracellular targeting signal).. Its function is as follows. Deubiquitinating enzyme that removes conjugated ubiquitin from specific proteins to regulate different cellular processes. Regulates cell proliferation by deubiquitinating and inhibiting RCE1 thereby controlling the small GTPases NRAS and HRAS localization and activation. In parallel, mediates deubiquitination of CDC25A, preventing CDC25A degradation by the proteasome during the G1/S and G2/M phases promoting cell-cycle progression. Also regulates cell proliferation and apoptosis through deubiquitination of SUDS3 a regulator of histone deacetylation. Through activation of the Rho family GTPases RAC1A, CDC42 and RHOA, regulates cell migration. Through the cleavage of 'Lys-48'- and 'Lys-63'-linked polyubiquitin chains of the cytoplasmic innate immune receptors RIGI and IFIH1 stimulates the cellular response to viral infection. The sequence is that of Ubiquitin carboxyl-terminal hydrolase 17 (USP17L2) from Homo sapiens (Human).